Here is a 41-residue protein sequence, read N- to C-terminus: Large ribosomal subunit protein bL36 (41 aa).

It belongs to the bacterial ribosomal protein bL36 family.

The sequence is that of Large ribosomal subunit protein bL36 from Jannaschia sp. (strain CCS1).